We begin with the raw amino-acid sequence, 654 residues long: Fructose-1,6-bisphosphatase class 3 (654 aa).

The interval 288–307 (NPAFKPKKRPDKHERLTQRE) is disordered. The span at 298-307 (DKHERLTQRE) shows a compositional bias: basic and acidic residues.

This sequence belongs to the FBPase class 3 family. Mn(2+) serves as cofactor.

It carries out the reaction beta-D-fructose 1,6-bisphosphate + H2O = beta-D-fructose 6-phosphate + phosphate. It functions in the pathway carbohydrate biosynthesis; gluconeogenesis. This chain is Fructose-1,6-bisphosphatase class 3, found in Staphylococcus aureus (strain MSSA476).